The sequence spans 137 residues: Nucleoside diphosphate kinase (137 aa).

ATP contacts are provided by K9, F57, R85, T91, R102, and N112. The active-site Pros-phosphohistidine intermediate is H115.

This sequence belongs to the NDK family. Homotetramer. Mg(2+) is required as a cofactor.

The protein resides in the cytoplasm. The enzyme catalyses a 2'-deoxyribonucleoside 5'-diphosphate + ATP = a 2'-deoxyribonucleoside 5'-triphosphate + ADP. It carries out the reaction a ribonucleoside 5'-diphosphate + ATP = a ribonucleoside 5'-triphosphate + ADP. Major role in the synthesis of nucleoside triphosphates other than ATP. The ATP gamma phosphate is transferred to the NDP beta phosphate via a ping-pong mechanism, using a phosphorylated active-site intermediate. The protein is Nucleoside diphosphate kinase of Desulfotalea psychrophila (strain LSv54 / DSM 12343).